Consider the following 521-residue polypeptide: MPSLLSSRIRNAEFAKKIVTDPAKLVPYFKNGDYVGWSGFTGVGYPKMIPNALARHVEENNLQGKLRFKLFVGASGGADTECKWAELNMIERRCPHQVGKPISKGINSGRIQFFDKHLSMFPQDLLYGYYTRNRESNTIDTAIIEATAITEDGGIVPGASVGASPELMQLAEKIIIEVNTAIPSFEGLHDIVEIPNPPHRTPININRVDDRIGKPYIKVDPKKVIGIVEADYGDITCANSPQDETSQAIAGHLVDFFHHEVSVGRLPKNLHPLQSGIGNIANAIIGGLAHSPFKDLEVWTEVLQDTFLPLFDSEKLRFATATSTRFSPQGFEKFYSNYDYYKERILLRPQVISNHPEIIRRLGCIAMNTPVEADIYAHANSTNVLGSRMLNGLGGSADFLRNAKLSIMHTPSVRPSKKDPTGITCIVPMATHVDQTEHDLDILVTEQGLADLRGLSPTERAREVIDKCAHPDYKPLLREYFDIAENYCLARGAGHEPHILANAFKMQLNLLEKGTMKIDHW.

Position 276 to 280 (276 to 280) interacts with CoA; sequence GIGNI. E301 (5-glutamyl coenzyme A thioester intermediate) is an active-site residue. The CoA site is built by N391 and G395.

The protein belongs to the acetyl-CoA hydrolase/transferase family.

It is found in the cytoplasm. The catalysed reaction is acetyl-CoA + H2O = acetate + CoA + H(+). Functionally, presumably involved in regulating the intracellular acetyl-CoA pool for fatty acid and cholesterol synthesis and fatty acid oxidation. The polypeptide is Acetyl-CoA hydrolase (ach1) (Schizosaccharomyces pombe (strain 972 / ATCC 24843) (Fission yeast)).